The chain runs to 343 residues: Serine/threonine-protein kinase SRK2C (343 aa).

The Protein kinase domain occupies 4–260 (YEIVKDIGSG…IEEIKNHSWF (257 aa)). ATP-binding positions include 10–18 (IGSGNFGVA) and K33. Residue D123 is the Proton acceptor of the active site. T158 carries the phosphothreonine modification.

The protein belongs to the protein kinase superfamily. Ser/Thr protein kinase family. Interacts with I-2 and TOPP1. In terms of tissue distribution, expressed in seedlings.

It catalyses the reaction L-seryl-[protein] + ATP = O-phospho-L-seryl-[protein] + ADP + H(+). The catalysed reaction is L-threonyl-[protein] + ATP = O-phospho-L-threonyl-[protein] + ADP + H(+). Functionally, involved in gene regulation and confers tolerance to drought and osmotic stress. The polypeptide is Serine/threonine-protein kinase SRK2C (SRK2C) (Arabidopsis thaliana (Mouse-ear cress)).